A 290-amino-acid chain; its full sequence is MPELPEVEVTRRGLLPHVVGRRIAAVTVRHRGLRWPVDPGLEACLAHRLVRRIERRGKYLLLECISADAAQPPGWLLVHLGMTGTLRVLPEAPPPGMHDHFDLLLDAGPAPGMLADTIVLRFRDPRRFGAILWTTLPEAELASHPLLSTLGIEPFDPAFDGAWLHRHTRGRSAAIKTVLLSGAIVVGVGNIYASESLFRAGIRPTTAAGRLSRARCDRLAQAVRDTLAQAIERGGSTLRDFVGSDGASGYFQLDCFVYDRAGLPCRVCATPVRQIVQGQRSTFYCPKCQH.

Residue Pro2 is the Schiff-base intermediate with DNA of the active site. Residue Glu3 is the Proton donor of the active site. Lys58 functions as the Proton donor; for beta-elimination activity in the catalytic mechanism. DNA contacts are provided by His98, Arg126, and Arg171. Residues Phe256–His290 form an FPG-type zinc finger. Catalysis depends on Arg280, which acts as the Proton donor; for delta-elimination activity.

It belongs to the FPG family. Monomer. Requires Zn(2+) as cofactor.

The enzyme catalyses Hydrolysis of DNA containing ring-opened 7-methylguanine residues, releasing 2,6-diamino-4-hydroxy-5-(N-methyl)formamidopyrimidine.. It catalyses the reaction 2'-deoxyribonucleotide-(2'-deoxyribose 5'-phosphate)-2'-deoxyribonucleotide-DNA = a 3'-end 2'-deoxyribonucleotide-(2,3-dehydro-2,3-deoxyribose 5'-phosphate)-DNA + a 5'-end 5'-phospho-2'-deoxyribonucleoside-DNA + H(+). Its function is as follows. Involved in base excision repair of DNA damaged by oxidation or by mutagenic agents. Acts as a DNA glycosylase that recognizes and removes damaged bases. Has a preference for oxidized purines, such as 7,8-dihydro-8-oxoguanine (8-oxoG). Has AP (apurinic/apyrimidinic) lyase activity and introduces nicks in the DNA strand. Cleaves the DNA backbone by beta-delta elimination to generate a single-strand break at the site of the removed base with both 3'- and 5'-phosphates. The protein is Formamidopyrimidine-DNA glycosylase of Cupriavidus taiwanensis (strain DSM 17343 / BCRC 17206 / CCUG 44338 / CIP 107171 / LMG 19424 / R1) (Ralstonia taiwanensis (strain LMG 19424)).